We begin with the raw amino-acid sequence, 388 residues long: 3-oxo-tetronate kinase (388 aa).

Residues serine 258 and 360-363 each bind ATP; that span reads GGET.

This sequence belongs to the four-carbon acid sugar kinase family.

It carries out the reaction 3-dehydro-L-erythronate + ATP = 3-dehydro-4-O-phospho-L-erythronate + ADP + H(+). It catalyses the reaction 3-dehydro-D-erythronate + ATP = 3-dehydro-4-O-phospho-D-erythronate + ADP + H(+). Functionally, catalyzes the ATP-dependent phosphorylation of 3-oxo-tetronate to 3-oxo-tetronate 4-phosphate. The chain is 3-oxo-tetronate kinase from Escherichia coli (strain K12).